A 59-amino-acid chain; its full sequence is MKAFYGILIIFILISMIDLSQQVFINATCTVSSQCRPKCIEAIGQAASKCINRKCKCYP.

An N-terminal signal peptide occupies residues 1–22; the sequence is MKAFYGILIIFILISMIDLSQQ. Intrachain disulfides connect cysteine 29/cysteine 50, cysteine 35/cysteine 55, and cysteine 39/cysteine 57.

Belongs to the short scorpion toxin superfamily. Potassium channel inhibitor family. Alpha-KTx 04 subfamily. As to expression, expressed by the venom gland.

The protein localises to the secreted. Its function is as follows. Potently blocks voltage-gated potassium channels (Kv). This is Putative potassium channel toxin Ts22 from Tityus serrulatus (Brazilian scorpion).